The following is an 875-amino-acid chain: Alanine--tRNA ligase (875 aa).

Zn(2+) contacts are provided by H563, H567, C665, and H669.

The protein belongs to the class-II aminoacyl-tRNA synthetase family. Requires Zn(2+) as cofactor.

Its subcellular location is the cytoplasm. The enzyme catalyses tRNA(Ala) + L-alanine + ATP = L-alanyl-tRNA(Ala) + AMP + diphosphate. Functionally, catalyzes the attachment of alanine to tRNA(Ala) in a two-step reaction: alanine is first activated by ATP to form Ala-AMP and then transferred to the acceptor end of tRNA(Ala). Also edits incorrectly charged Ser-tRNA(Ala) and Gly-tRNA(Ala) via its editing domain. In Desulfitobacterium hafniense (strain Y51), this protein is Alanine--tRNA ligase.